Reading from the N-terminus, the 338-residue chain is S-adenosylmethionine:tRNA ribosyltransferase-isomerase (338 aa).

The protein belongs to the QueA family. In terms of assembly, monomer.

The protein localises to the cytoplasm. The enzyme catalyses 7-aminomethyl-7-carbaguanosine(34) in tRNA + S-adenosyl-L-methionine = epoxyqueuosine(34) in tRNA + adenine + L-methionine + 2 H(+). Its pathway is tRNA modification; tRNA-queuosine biosynthesis. Transfers and isomerizes the ribose moiety from AdoMet to the 7-aminomethyl group of 7-deazaguanine (preQ1-tRNA) to give epoxyqueuosine (oQ-tRNA). This is S-adenosylmethionine:tRNA ribosyltransferase-isomerase from Francisella tularensis subsp. mediasiatica (strain FSC147).